The following is a 252-amino-acid chain: Imidazole glycerol phosphate synthase subunit HisF (252 aa).

Catalysis depends on residues aspartate 11 and aspartate 130.

The protein belongs to the HisA/HisF family. Heterodimer of HisH and HisF.

The protein localises to the cytoplasm. It carries out the reaction 5-[(5-phospho-1-deoxy-D-ribulos-1-ylimino)methylamino]-1-(5-phospho-beta-D-ribosyl)imidazole-4-carboxamide + L-glutamine = D-erythro-1-(imidazol-4-yl)glycerol 3-phosphate + 5-amino-1-(5-phospho-beta-D-ribosyl)imidazole-4-carboxamide + L-glutamate + H(+). The protein operates within amino-acid biosynthesis; L-histidine biosynthesis; L-histidine from 5-phospho-alpha-D-ribose 1-diphosphate: step 5/9. Its function is as follows. IGPS catalyzes the conversion of PRFAR and glutamine to IGP, AICAR and glutamate. The HisF subunit catalyzes the cyclization activity that produces IGP and AICAR from PRFAR using the ammonia provided by the HisH subunit. This chain is Imidazole glycerol phosphate synthase subunit HisF, found in Geobacillus kaustophilus (strain HTA426).